A 147-amino-acid polypeptide reads, in one-letter code: Phosphoribosyl-AMP cyclohydrolase (147 aa).

Asp91 is a binding site for Mg(2+). Cys92 contacts Zn(2+). The Mg(2+) site is built by Asp93 and Asp95. Cys109 and Cys116 together coordinate Zn(2+).

This sequence belongs to the PRA-CH family. In terms of assembly, homodimer. Mg(2+) is required as a cofactor. The cofactor is Zn(2+).

The protein resides in the cytoplasm. The enzyme catalyses 1-(5-phospho-beta-D-ribosyl)-5'-AMP + H2O = 1-(5-phospho-beta-D-ribosyl)-5-[(5-phospho-beta-D-ribosylamino)methylideneamino]imidazole-4-carboxamide. Its pathway is amino-acid biosynthesis; L-histidine biosynthesis; L-histidine from 5-phospho-alpha-D-ribose 1-diphosphate: step 3/9. In terms of biological role, catalyzes the hydrolysis of the adenine ring of phosphoribosyl-AMP. The chain is Phosphoribosyl-AMP cyclohydrolase from Rhodopseudomonas palustris (strain BisB18).